The chain runs to 600 residues: Oligopeptide-binding protein OppA (600 aa).

The first 22 residues, 1–22, serve as a signal peptide directing secretion; that stretch reads MNKLKVTLLASSVVLAATLLSA. Cys-23 carries the N-palmitoyl cysteine lipid modification. A lipid anchor (S-diacylglycerol cysteine) is attached at Cys-23.

This sequence belongs to the bacterial solute-binding protein 5 family. The complex is composed of two ATP-binding proteins (OppD and OppF), two transmembrane proteins (OppB and OppC) and a solute-binding protein (OppA).

The protein resides in the cell membrane. Its function is as follows. Part of the ABC transporter complex OppABCDF involved in the uptake of oligopeptides. Essential for uptake of peptides larger than three amino acids and for growth in milk. The chain is Oligopeptide-binding protein OppA from Lactococcus lactis subsp. lactis (Streptococcus lactis).